The primary structure comprises 243 residues: Probable transcriptional regulator ycf27 (243 aa).

A Response regulatory domain is found at 7 to 120 (KILVVDDEAS…ELEARIRSVL (114 aa)). D56 is modified (4-aspartylphosphate). The segment at residues 76–94 (DVPIIMLTALGEVCDRITG) is a DNA-binding region (H-T-H motif). Positions 135 to 236 (SGIISIGFLK…ARGTGYLFQR (102 aa)) form a DNA-binding region, ompR/PhoB-type.

The protein localises to the plastid. Its subcellular location is the chloroplast. In terms of biological role, probable promoter-specific protein mediating the interaction between DNA and RNA polymerase. The polypeptide is Probable transcriptional regulator ycf27 (ycf27) (Porphyra purpurea (Red seaweed)).